The sequence spans 117 residues: Immunoglobulin heavy variable 1-69 (117 aa).

A signal peptide spans 1–19 (MDWTWRFLFVVAAATGVQS). Glutamine 20 carries the post-translational modification Pyrrolidone carboxylic acid. Residues 20–44 (QVQLVQSGAEVKKPGSSVKVSCKAS) form a framework-1 region. In terms of domain architecture, Ig-like spans 20 to 117 (QVQLVQSGAE…EDTAVYYCAR (98 aa)). A disulfide bridge connects residues cysteine 41 and cysteine 115. The interval 45-52 (GGTFSSYA) is complementarity-determining-1. The interval 53–69 (ISWVRQAPGQGLEWMGG) is framework-2. Residues 70–77 (IIPIFGTA) are complementarity-determining-2. The tract at residues 78–115 (NYAQKFQGRVTITADKSTSTAYMELSSLRSEDTAVYYC) is framework-3. Positions 116-117 (AR) are complementarity-determining-3.

In terms of assembly, immunoglobulins are composed of two identical heavy chains and two identical light chains; disulfide-linked.

Its subcellular location is the secreted. The protein resides in the cell membrane. Its function is as follows. V region of the variable domain of immunoglobulin heavy chains that participates in the antigen recognition. Immunoglobulins, also known as antibodies, are membrane-bound or secreted glycoproteins produced by B lymphocytes. In the recognition phase of humoral immunity, the membrane-bound immunoglobulins serve as receptors which, upon binding of a specific antigen, trigger the clonal expansion and differentiation of B lymphocytes into immunoglobulins-secreting plasma cells. Secreted immunoglobulins mediate the effector phase of humoral immunity, which results in the elimination of bound antigens. The antigen binding site is formed by the variable domain of one heavy chain, together with that of its associated light chain. Thus, each immunoglobulin has two antigen binding sites with remarkable affinity for a particular antigen. The variable domains are assembled by a process called V-(D)-J rearrangement and can then be subjected to somatic hypermutations which, after exposure to antigen and selection, allow affinity maturation for a particular antigen. This is Immunoglobulin heavy variable 1-69 from Homo sapiens (Human).